The primary structure comprises 569 residues: MGQTSVSALSPQPGSVDGLDKASIANSDGPPAGSQTPPFKRKGKLSTIGKIFKPWKWRKEKTSDKFRETSAVLERKISTRQSREELIRRGLLKELPDQDGDVTVNFENSNGHMIHIGEEATQEENVGKPEEGNVSVCEKGPPREEQAEEKTAGSSHPKKTTGSKASSSPSASSTSSHPRGPKESLTGKAGAVGTTRGKKKISKQPAAAASRLSPNTVTSETSSLKGELSDTGVESLKPEETVAGAEEEATGKPKAVVVALPPVTVPPSSPALPLPPEDPCTIALDTPMVLVSDGPTLPISALETSPLPGTEEPANRTTPYSSTGLGGSREQAKCFTTKDGLGKAGPQLLTPGQMGDSLESFSAPEDEAPREYQANDSDSDGPILYTDDDDEEDDDDDSTGESALASKIRRRDTLAIKLGNRPSKKELEDKNILQRTSEEERQELRQQIGTKLVRRLSQRPTTEELEQRSILKQKNEEEEQEAKMELKRRLSRKLSLRPTVPELQARRILRFNEYVEVTDSPDYDRRADKPWARLTPADKAAIRKELNEFKSTEMEVHEESRQFTRFHRP.

Residues 1–13 are compositionally biased toward polar residues; it reads MGQTSVSALSPQP. A disordered region spans residues 1–47; that stretch reads MGQTSVSALSPQPGSVDGLDKASIANSDGPPAGSQTPPFKRKGKLST. Residue Ser27 is modified to Phosphoserine. Thr36 is modified (phosphothreonine). The RPEL 1 repeat unit spans residues 71-96; it reads AVLERKISTRQSREELIRRGLLKELP. Disordered regions lie at residues 98 to 253 and 295 to 483; these read QDGD…TGKP and PTLP…QEAK. Basic and acidic residues predominate over residues 140–151; it reads GPPREEQAEEKT. Residues 162–176 show a composition bias toward low complexity; sequence GSKASSSPSASSTSS. Residues 212–224 are compositionally biased toward polar residues; the sequence is LSPNTVTSETSSL. Ser357 carries the post-translational modification Phosphoserine. Residues 386 to 399 are compositionally biased toward acidic residues; sequence TDDDDEEDDDDDST. RPEL repeat units follow at residues 412–437, 450–475, and 488–513; these read DTLA…QRTS, TKLV…KQKN, and RRLS…RFNE. Over residues 423–444 the composition is skewed to basic and acidic residues; the sequence is SKKELEDKNILQRTSEEERQEL. The residue at position 457 (Ser457) is a Phosphoserine. Residues 461 to 483 show a composition bias toward basic and acidic residues; the sequence is TTEELEQRSILKQKNEEEEQEAK. A Phosphoserine modification is found at Ser495.

The protein belongs to the phosphatase and actin regulator family. In terms of assembly, binds PPP1CA and actin. As to expression, expressed in the brain with high levels in the cerebellum, specifically in the Purkinje cell layer, choroid plexus and thalamus (ventral, rhomboid and anterior nuclei). Moderate to high expression in the hippocampus, piriform cortex, olfactory bulb, entorhinal cortex, as well as in geniculate bodies, lamboid septal zone, preoptic area and ventral pallidum (at protein level).

In Rattus norvegicus (Rat), this protein is Phosphatase and actin regulator 2 (Phactr2).